Here is a 79-residue protein sequence, read N- to C-terminus: MKCATLSLVLSMVVLMAEPGDAFFHHIFRGIVHVGKTIHKLVTGGKAEQDQQDQQYQQDQQDQQAQQYQRFNRERAAFD.

The N-terminal stretch at 1–22 (MKCATLSLVLSMVVLMAEPGDA) is a signal peptide. A Glycine amide modification is found at Gly-44. The tract at residues 45-68 (GKAEQDQQDQQYQQDQQDQQAQQY) is disordered. Positions 47–79 (AEQDQQDQQYQQDQQDQQAQQYQRFNRERAAFD) are excised as a propeptide. Over residues 52 to 68 (QDQQYQQDQQDQQAQQY) the composition is skewed to low complexity.

As to expression, expressed in gill, skin, intestine, spleen, anterior kidney, and blood cells.

It is found in the secreted. In terms of biological role, antimicrobial peptide with broad-spectrum activity against Gram-positive and Gram-negative bacteria as well as against a variety of fungi. Rapidly inactivates both channel catfish herpesvirus (ED(50)=4 uM) and frog virus 3 (ED(50)=13 uM) over a wide temperature range. Seems to disrupt the membranes by adopting an alpha helical conformation. In Morone chrysops (White bass), this protein is Moronecidin.